Here is an 820-residue protein sequence, read N- to C-terminus: Serine/threonine-protein phosphatase 4 regulatory subunit 3-A (820 aa).

A WH1 domain is found at 1–100; the sequence is MSDTRRRVKV…DEIWEKICQV (100 aa). Residues 682-694 show a composition bias toward acidic residues; sequence ELWFNEDDEEEGE. Disordered stretches follow at residues 682 to 712 and 750 to 820; these read ELWFNEDDEEEGEAVVPPVEKTKPEDDFPEG and AANG…RLGS. The segment covering 701-712 has biased composition (basic and acidic residues); the sequence is EKTKPEDDFPEG. Polar residues-rich tracts occupy residues 750-761 and 768-790; these read AANGANSTNSKS and PATSNGSSSKNTSLTTTVASTKG. Residues 798–809 show a composition bias toward acidic residues; the sequence is YPDDEDEEEEED.

It belongs to the SMEK family. In terms of assembly, serine/threonine-protein phosphatase 4 (PP4) occurs in different assemblies of the catalytic and one or more regulatory subunits.

Its function is as follows. Regulatory subunit of serine/threonine-protein phosphatase 4 (PP4). The polypeptide is Serine/threonine-protein phosphatase 4 regulatory subunit 3-A (Xenopus laevis (African clawed frog)).